The following is a 192-amino-acid chain: NF-kappa-B inhibitor-interacting Ras-like protein 1 (192 aa).

11–18 contributes to the GTP binding site; it reads GLLSVGKT. The Effector region signature appears at 35 to 43; it reads DCETMEDVY. An interactions with NFKBIA and NFKBIB region spans residues 58–93; that stretch reads HLYDTRGLQEGVELPKHYFSFADGFVLVYSVNNLES. GTP-binding positions include 61–65 and 120–123; these read DTRGL and NKID. The disordered stretch occupies residues 168-192; it reads LSQPQSKSSFPLPGRKNKGNSSSEN.

It belongs to the small GTPase superfamily. Ras family. KappaB-Ras subfamily. Interacts with both NF-kappa-B inhibitor alpha (NFKBIA) and beta (NFKBIB) in vitro. However, it probably only interacts with NFKBIB in vivo. Forms a complex with NFKBIB and NF-kappa-B heterodimer (p50/NFKB1 and p65/RELA). Also interacts with c-Rel (REL).

Its subcellular location is the cytoplasm. In terms of biological role, atypical Ras-like protein that acts as a potent regulator of NF-kappa-B activity by preventing the degradation of NF-kappa-B inhibitor beta (NFKBIB) by most signals, explaining why NFKBIB is more resistant to degradation. May act by blocking phosphorylation of NFKBIB and mediating cytoplasmic retention of p65/RELA NF-kappa-B subunit. It is unclear whether it acts as a GTPase. Both GTP- and GDP-bound forms block phosphorylation of NFKBIB. This is NF-kappa-B inhibitor-interacting Ras-like protein 1 (NKIRAS1) from Macaca fascicularis (Crab-eating macaque).